The sequence spans 534 residues: Ulvan lyase NLR42 (534 aa).

Residues 1 to 47 (MVFFKDLFIFKSLIKGSLYSGHMKKKLLNYLPLFALMLFTVSMMAQT) form the signal peptide. A disulfide bond links C59 and C89. Residues G63, N68, D86, T88, A91, and D92 each contribute to the Ca(2+) site. Residue Y164 coordinates substrate. The active-site Proton acceptor is K169. Residues 218-223 (SGAAGR) and 288-291 (YRVK) each bind substrate. Catalysis depends on Y288, which acts as the Proton donor/acceptor. The ulvan-binding domain stretch occupies residues 316 to 449 (PAADIYRIKN…SKWNLESTTL (134 aa)). Positions 450–534 (SVDSQQIASV…KVYQTKLIVN (85 aa)) are cleaved as a propeptide — removed by the type IX secretion system (T9SS).

Belongs to the polysaccharide lyase 28 family. Ca(2+) serves as cofactor.

The protein localises to the secreted. Its function is as follows. Ulvan lyase involved in ulvan degradation. Ulvan is the main polysaccharide component of the Ulvales (green seaweed) cell wall. It is composed of disaccharide building blocks comprising 3-sulfated rhamnose (Rha3S) linked to D-glucuronic acid (GlcA), L-iduronic acid (IduA), or D-xylose (Xyl). Ulvan lyase catalyzes the endolytic cleavage of the glycosidic bond between Rha3S and the uronic acids GlcA or IduA, producing oligosaccharides that have unsaturated 4-deoxy-L-threo-hex-4-enopyranosiduronic acid (deltaUA) at the non-reducing end. This results eventually in the degradation of the ulvan polysaccharide into deltaUA-Rha3S disaccharides and deltaUA-Rha3S-Xyl-Rha3S tetrasaccharides. This is Ulvan lyase NLR42 from Nonlabens ulvanivorans (Persicivirga ulvanivorans).